Reading from the N-terminus, the 934-residue chain is uncharacterized protein (934 aa).

The N-terminal stretch at 1–24 (MKLKKRYLLLGSTLTVSAALILSA) is a signal peptide. Residue Cys-25 is the site of N-palmitoyl cysteine attachment. Residue Cys-25 is the site of S-diacylglycerol cysteine attachment. Residues 111–131 (SGLKGRAQKNGSTDSSDGSSK) form a disordered region. Over residues 119 to 131 (KNGSTDSSDGSSK) the composition is skewed to polar residues.

It is found in the cell membrane. This is an uncharacterized protein from Mycoplasma genitalium (strain ATCC 33530 / DSM 19775 / NCTC 10195 / G37) (Mycoplasmoides genitalium).